Reading from the N-terminus, the 92-residue chain is Enhancer of yellow 2 transcription factor (92 aa).

It belongs to the ENY2 family. In terms of assembly, component of the nuclear pore complex (NPC)-associated TREX-2 complex (transcription and export complex 2). Component of the SAGA transcription coactivator-HAT complex. Within the SAGA complex, participates in a subcomplex of SAGA called the DUB module (deubiquitination module).

The protein resides in the nucleus. Its subcellular location is the nucleoplasm. Functionally, involved in mRNA export coupled transcription activation by association with both the TREX-2 and the SAGA complexes. The transcription regulatory histone acetylation (HAT) complex SAGA is a multiprotein complex that activates transcription by remodeling chromatin and mediating histone acetylation and deubiquitination. Within the SAGA complex, participates in a subcomplex that specifically deubiquitinates histones. The SAGA complex is recruited to specific gene promoters by activators, where it is required for transcription. The TREX-2 complex functions in docking export-competent ribonucleoprotein particles (mRNPs) to the nuclear entrance of the nuclear pore complex (nuclear basket). TREX-2 participates in mRNA export and accurate chromatin positioning in the nucleus by tethering genes to the nuclear periphery. The chain is Enhancer of yellow 2 transcription factor from Aedes aegypti (Yellowfever mosquito).